The following is a 515-amino-acid chain: Putative cytochrome P450 CYP13A2 (515 aa).

Position 460 (Cys-460) interacts with heme.

This sequence belongs to the cytochrome P450 family. Heme serves as cofactor.

Its function is as follows. Cytochromes P450 are a group of heme-thiolate monooxygenases. They oxidize a variety of structurally unrelated compounds, including steroids, fatty acids, and xenobiotics. The protein is Putative cytochrome P450 CYP13A2 (cyp-13A2) of Caenorhabditis elegans.